The sequence spans 99 residues: Nucleoid-associated protein SpyM3_1606 (99 aa).

The protein belongs to the YbaB/EbfC family. In terms of assembly, homodimer.

Its subcellular location is the cytoplasm. It localises to the nucleoid. Binds to DNA and alters its conformation. May be involved in regulation of gene expression, nucleoid organization and DNA protection. The sequence is that of Nucleoid-associated protein SpyM3_1606 from Streptococcus pyogenes serotype M3 (strain ATCC BAA-595 / MGAS315).